The primary structure comprises 469 residues: Zinc finger and BTB domain-containing protein 8A.1-B (469 aa).

One can recognise a BTB domain in the interval 24–92; it reads CDCHIIVEGQ…VYSGKLPLSG (69 aa). 2 consecutive C2H2-type zinc fingers follow at residues 315 to 337 and 343 to 366; these read FKCP…LRCH and YPCE…QTIH.

It is found in the nucleus. May be involved in transcriptional regulation. The polypeptide is Zinc finger and BTB domain-containing protein 8A.1-B (zbtb8a.1-b) (Xenopus laevis (African clawed frog)).